A 435-amino-acid chain; its full sequence is MTLDLSTFAREKGVKYFMISYTDLFGGQRAKLVPAEAIADMQKGGAGFAGFATWFDLTPAHPDLFALPDASAVIQLPWKKDVAWVAADCIMDDAPVEQAPRVVLKKLVAEAAQEGLRVKTGVEPEFFLISPDGSKISDTFDTAEKPCYDQQAIMRRYDVIAEICDYMLELGWKPYQNDHEDANGQFEMNWEYDDALRTADKHSFFKFMVKSIAEKHGLRATFMPKPFKGLTGNGCHCHISVWDLAGEVNAFADNKAEFGLSAEGRHFLGGIMKHASALAAVTNPTVNSYKRINAPRTISGATWAPNSVTWTGNNRTHMVRVPGPGRFELRLPDGAVNPYLLQAIIIAAGLSGVRSKADPGRHYDIDMYKDGHKVTDAPKLPLNLLDALREYNRDEELQEALGREFSAAYLKLKQGEWNTYCSQFTEWEHQTTLDV.

A GS beta-grasp domain is found at 12-94; it reads KGVKYFMISY…VAADCIMDDA (83 aa). A GS catalytic domain is found at 100-435; the sequence is PRVVLKKLVA…EWEHQTTLDV (336 aa). Residues Glu123, Glu125, Glu180, and Glu187 each coordinate Mg(2+). Gly232 lines the L-glutamate pocket. His236 is a Mg(2+) binding site. Ser240 is an ATP binding site. Arg291 and Arg315 together coordinate L-glutamate. ATP-binding residues include Arg315 and Arg320. Glu328 is a binding site for Mg(2+). Residue Arg330 coordinates L-glutamate.

Belongs to the glutamine synthetase family. Homooctamer. Requires Mg(2+) as cofactor.

The enzyme catalyses L-glutamate + NH4(+) + ATP = L-glutamine + ADP + phosphate + H(+). Inhibited by methionine sulfoximine, ADP and pyrophosphate, but not by various nitrogen-containing metabolites that inhibit other GS enzymes. Its function is as follows. Catalyzes the ATP-dependent biosynthesis of glutamine from glutamate and ammonia. The protein is Glutamine synthetase of Rhizobium meliloti (strain 1021) (Ensifer meliloti).